Here is a 317-residue protein sequence, read N- to C-terminus: Fe-S cluster assembly protein dre2 (317 aa).

The tract at residues Pro-22–Val-152 is N-terminal SAM-like domain. A linker region spans residues Pro-153 to Leu-209. [2Fe-2S] cluster contacts are provided by Cys-219, Cys-230, Cys-233, and Cys-235. The interval Cys-219 to Cys-235 is fe-S binding site A. Cys-280, Cys-283, Cys-291, and Cys-294 together coordinate [4Fe-4S] cluster. 2 short sequence motifs (cx2C motif) span residues Cys-280 to Cys-283 and Cys-291 to Cys-294. The segment at Cys-280–Cys-294 is fe-S binding site B.

It belongs to the anamorsin family. Monomer. Interacts with tah18. Interacts with mia40. Requires [2Fe-2S] cluster as cofactor. [4Fe-4S] cluster is required as a cofactor.

The protein localises to the cytoplasm. It localises to the mitochondrion intermembrane space. Its function is as follows. Component of the cytosolic iron-sulfur (Fe-S) protein assembly (CIA) machinery required for the maturation of extramitochondrial Fe-S proteins. Part of an electron transfer chain functioning in an early step of cytosolic Fe-S biogenesis, facilitating the de novo assembly of a [4Fe-4S] cluster on the scaffold complex cfd1-nbp35. Electrons are transferred to dre2 from NADPH via the FAD- and FMN-containing protein tah18. Tah18-dre2 are also required for the assembly of the diferric tyrosyl radical cofactor of ribonucleotide reductase (RNR), probably by providing electrons for reduction during radical cofactor maturation in the catalytic small subunit rnr2. The sequence is that of Fe-S cluster assembly protein dre2 from Penicillium rubens (strain ATCC 28089 / DSM 1075 / NRRL 1951 / Wisconsin 54-1255) (Penicillium chrysogenum).